A 257-amino-acid polypeptide reads, in one-letter code: MRPTMVAGNWKMNGLSGDAVHLTQAILHAGLEPMRPEVVIFPPFTLLHAVSQEAKSSALRWGGQNLFWEASGAYTGEISGAMLRDMGCRYVLIGHSERRQIFAESDAQIVQKIKAALLSGLIPVVCVGETEAERAQGLTDAVLRRQLEAVLPLLNLEASQPNLIIAYEPVWAIGTGLSASPEQAQAVHVFIRELAAAYSAQLARRLLLLYGGSVKGNNAAALFDQADIDGALVGGASLQAGEFIQICRAAESAGRGG.

Residue 9–11 (NWK) coordinates substrate. Histidine 95 acts as the Electrophile in catalysis. The active-site Proton acceptor is glutamate 168. Residues glycine 174, serine 213, and 234 to 235 (GG) contribute to the substrate site.

The protein belongs to the triosephosphate isomerase family. In terms of assembly, homodimer.

Its subcellular location is the cytoplasm. The catalysed reaction is D-glyceraldehyde 3-phosphate = dihydroxyacetone phosphate. Its pathway is carbohydrate biosynthesis; gluconeogenesis. It participates in carbohydrate degradation; glycolysis; D-glyceraldehyde 3-phosphate from glycerone phosphate: step 1/1. Involved in the gluconeogenesis. Catalyzes stereospecifically the conversion of dihydroxyacetone phosphate (DHAP) to D-glyceraldehyde-3-phosphate (G3P). This chain is Triosephosphate isomerase, found in Acidithiobacillus ferrooxidans (strain ATCC 23270 / DSM 14882 / CIP 104768 / NCIMB 8455) (Ferrobacillus ferrooxidans (strain ATCC 23270)).